A 369-amino-acid chain; its full sequence is 4-hydroxy-3-methylbut-2-en-1-yl diphosphate synthase (flavodoxin) (369 aa).

Cys-270, Cys-273, Cys-305, and Glu-312 together coordinate [4Fe-4S] cluster.

The protein belongs to the IspG family. The cofactor is [4Fe-4S] cluster.

It catalyses the reaction (2E)-4-hydroxy-3-methylbut-2-enyl diphosphate + oxidized [flavodoxin] + H2O + 2 H(+) = 2-C-methyl-D-erythritol 2,4-cyclic diphosphate + reduced [flavodoxin]. Its pathway is isoprenoid biosynthesis; isopentenyl diphosphate biosynthesis via DXP pathway; isopentenyl diphosphate from 1-deoxy-D-xylulose 5-phosphate: step 5/6. Functionally, converts 2C-methyl-D-erythritol 2,4-cyclodiphosphate (ME-2,4cPP) into 1-hydroxy-2-methyl-2-(E)-butenyl 4-diphosphate. The polypeptide is 4-hydroxy-3-methylbut-2-en-1-yl diphosphate synthase (flavodoxin) (Pseudomonas putida (strain W619)).